We begin with the raw amino-acid sequence, 327 residues long: Aspartate--ammonia ligase (327 aa).

It belongs to the class-II aminoacyl-tRNA synthetase family. AsnA subfamily.

It localises to the cytoplasm. It catalyses the reaction L-aspartate + NH4(+) + ATP = L-asparagine + AMP + diphosphate + H(+). It participates in amino-acid biosynthesis; L-asparagine biosynthesis; L-asparagine from L-aspartate (ammonia route): step 1/1. The chain is Aspartate--ammonia ligase from Fusobacterium nucleatum subsp. nucleatum (strain ATCC 25586 / DSM 15643 / BCRC 10681 / CIP 101130 / JCM 8532 / KCTC 2640 / LMG 13131 / VPI 4355).